The primary structure comprises 1028 residues: Ubiquitin conjugation factor E4 A (1028 aa).

Positions 33–57 (KEQLKQQSDELPASPDDSDNSVSES) are disordered. Lys-386 carries the N6-acetyllysine modification. Residues 949 to 1023 (DACDEFLDPI…QRWLAERKQQ (75 aa)) enclose the U-box domain.

The protein belongs to the ubiquitin conjugation factor E4 family. Expressed in liver, heart, brain, kidney and testis.

It localises to the cytoplasm. It carries out the reaction S-ubiquitinyl-[E2 ubiquitin-conjugating enzyme]-L-cysteine + [acceptor protein]-L-lysine = [E2 ubiquitin-conjugating enzyme]-L-cysteine + N(6)-ubiquitinyl-[acceptor protein]-L-lysine.. The protein operates within protein modification; protein ubiquitination. Functionally, ubiquitin-protein ligase that probably functions as an E3 ligase in conjunction with specific E1 and E2 ligases. May also function as an E4 ligase mediating the assembly of polyubiquitin chains on substrates ubiquitinated by another E3 ubiquitin ligase. Mediates 'Lys-48'-linked polyubiquitination of substrates. The polypeptide is Ubiquitin conjugation factor E4 A (Mus musculus (Mouse)).